An 89-amino-acid chain; its full sequence is Phosphocarrier protein HPr (89 aa).

Residues 1–89 form the HPr domain; that stretch reads MERTVTVVPE…DILSTPEAKQ (89 aa). Residue His14 is the Pros-phosphohistidine intermediate of the active site. Ser47 is subject to Phosphoserine; by HPrK/P.

This sequence belongs to the HPr family.

It is found in the cytoplasm. With respect to regulation, phosphorylation on Ser-47 inhibits the phosphoryl transfer from enzyme I to HPr. Functionally, general (non sugar-specific) component of the phosphoenolpyruvate-dependent sugar phosphotransferase system (sugar PTS). This major carbohydrate active-transport system catalyzes the phosphorylation of incoming sugar substrates concomitantly with their translocation across the cell membrane. The phosphoryl group from phosphoenolpyruvate (PEP) is transferred to the phosphoryl carrier protein HPr by enzyme I. Phospho-HPr then transfers it to the PTS EIIA domain. Is involved in fructose transport. This Haloferax volcanii (strain ATCC 29605 / DSM 3757 / JCM 8879 / NBRC 14742 / NCIMB 2012 / VKM B-1768 / DS2) (Halobacterium volcanii) protein is Phosphocarrier protein HPr (ptsH1).